The sequence spans 321 residues: Cytoskeleton protein RodZ (321 aa).

Residues 1-111 (MNTEATHDQN…LGKRRKKRDG (111 aa)) lie on the Cytoplasmic side of the membrane. One can recognise an HTH cro/C1-type domain in the interval 19 to 71 (LRNAREQLGLSQQAVAERLCLKVSTVRDIEEDKAPSDLASTFLRGYIRSYARL). Residues 30-49 (QQAVAERLCLKVSTVRDIEE) constitute a DNA-binding region (H-T-H motif). A helical; Signal-anchor for type II membrane protein membrane pass occupies residues 112–132 (WLMSFTWLVLFVVVGLTGAWW). Residues 133–321 (WQNHKAQQEE…TINAEPTSAQ (189 aa)) lie on the Periplasmic side of the membrane. Positions 167-190 (DTRAAASQDTTPAETAPAAPVDST) are disordered. Residues 176–190 (TTPAETAPAAPVDST) are compositionally biased toward low complexity.

This sequence belongs to the RodZ family.

Its subcellular location is the cell inner membrane. Cytoskeletal protein that is involved in cell-shape control through regulation of the length of the long axis. This Salmonella arizonae (strain ATCC BAA-731 / CDC346-86 / RSK2980) protein is Cytoskeleton protein RodZ.